A 1037-amino-acid polypeptide reads, in one-letter code: MRGSGPRGAGRRRPPSGGGDTPITPASLAGCYSAPRRAPLWTCLLLCAALRTLLASPSNEVNLLDSRTVMGDLGWIAFPKNGWEEIGEVDENYAPIHTYQVCKVMEQNQNNWLLTSWISNEGASRIFIELKFTLRDCNSLPGGLGTCKETFNMYYFESDDQNGRNIKENQYIKIDTIAADESFTELDLGDRVMKLNTEVRDVGPLSKKGFYLAFQDVGACIALVSVRVYYKKCPSVVRHLAVFPDTITGADSSQLLEVSGSCVNHSVTDEPPKMHCSAEGEWLVPIGKCMCKAGYEEKNGTCQVCRPGFFKASPHIQSCGKCPPHSYTHEEASTSCVCEKDYFRRESDPPTMACTRPPSAPRNAISNVNETSVFLEWIPPADTGGRKDVSYYIACKKCNSHAGVCEECGGHVRYLPRQSGLKNTSVMMVDLLAHTNYTFEIEAVNGVSDLSPGARQYVSVNVTTNQAAPSPVTNVKKGKIAKNSISLSWQEPDRPNGIILEYEIKYFEKDQETSYTIIKSKETTITAEGLKPASVYVFQIRARTAAGYGVFSRRFEFETTPVFAASSDQSQIPVIAVSVTVGVILLAVVIGVLLSGSCCECGCGRASSLCAVAHPSLIWRCGYSKAKQDPEEEKMHFHNGHIKLPGVRTYIDPHTYEDPNQAVHEFAKEIEASCITIERVIGAGEFGEVCSGRLKLPGKRELPVAIKTLKVGYTEKQRRDFLGEASIMGQFDHPNIIHLEGVVTKSKPVMIVTEYMENGSLDTFLKKNDGQFTVIQLVGMLRGISAGMKYLSDMGYVHRDLAARNILINSNLVCKVSDFGLSRVLEDDPEAAYTTRGGKIPIRWTAPEAIAFRKFTSASDVWSYGIVMWEVVSYGERPYWEMTNQDVIKAVEEGYRLPSPMDCPAALYQLMLDCWQKERNSRPKFDEIVNMLDKLIRNPSSLKTLVNASCRVSNLLAEHSPLGSGAYRSVGEWLEAIKMGRYTEIFMENGYSSMDAVAQVTLEDLRRLGVTLVGHQKKIMNSLQEMKVQLVNGMVPL.

Positions 1-24 (MRGSGPRGAGRRRPPSGGGDTPIT) are cleaved as a signal peptide. Positions 1-24 (MRGSGPRGAGRRRPPSGGGDTPIT) are disordered. The Extracellular segment spans residues 25 to 573 (PASLAGCYSA…AASSDQSQIP (549 aa)). The region spanning 60-238 (EVNLLDSRTV…YYKKCPSVVR (179 aa)) is the Eph LBD domain. 6 N-linked (GlcNAc...) asparagine glycosylation sites follow: Asn264, Asn299, Asn369, Asn423, Asn436, and Asn461. 2 consecutive Fibronectin type-III domains span residues 357-467 (PPSA…TNQA) and 468-562 (APSP…TTPV). A helical transmembrane segment spans residues 574-594 (VIAVSVTVGVILLAVVIGVLL). Topologically, residues 595 to 1037 (SGSCCECGCG…VQLVNGMVPL (443 aa)) are cytoplasmic. Phosphotyrosine; by autocatalysis is present on residues Tyr650 and Tyr656. The region spanning 675-936 (ITIERVIGAG…EIVNMLDKLI (262 aa)) is the Protein kinase domain. Residues 681–689 (IGAGEFGEV) and Lys707 contribute to the ATP site. Residue Asp800 is the Proton acceptor of the active site. A phosphotyrosine; by autocatalysis mark is found at Tyr833 and Tyr982. The SAM domain occupies 965-1029 (GAYRSVGEWL…MNSLQEMKVQ (65 aa)). The PDZ-binding signature appears at 1035 to 1037 (VPL).

It belongs to the protein kinase superfamily. Tyr protein kinase family. Ephrin receptor subfamily. As to quaternary structure, heterotetramer upon binding of the ligand. The heterotetramer is composed of an ephrin dimer and a receptor dimer. Oligomerization is probably required to induce biological responses. Interacts (via SAM domain) with SAMD5 (via SAM domain). Post-translationally, phosphorylated. Phosphorylation is stimulated by the ligand EFNA5. Dephosphorylation upon stimulation by glucose, inhibits EPHA5 forward signaling and results in insulin secretion. In terms of tissue distribution, almost exclusively expressed in the nervous system in cortical neurons, cerebellar Purkinje cells and pyramidal neurons within the cortex and hippocampus. Display an increasing gradient of expression from the forebrain to hindbrain and spinal cord.

The protein resides in the cell membrane. The protein localises to the cell projection. It is found in the axon. Its subcellular location is the dendrite. The enzyme catalyses L-tyrosyl-[protein] + ATP = O-phospho-L-tyrosyl-[protein] + ADP + H(+). In terms of biological role, receptor tyrosine kinase which binds promiscuously GPI-anchored ephrin-A family ligands residing on adjacent cells, leading to contact-dependent bidirectional signaling into neighboring cells. The signaling pathway downstream of the receptor is referred to as forward signaling while the signaling pathway downstream of the ephrin ligand is referred to as reverse signaling. Among GPI-anchored ephrin-A ligands, EFNA5 most probably constitutes the cognate/functional ligand for EPHA5. Functions as an axon guidance molecule during development and may be involved in the development of the retinotectal, entorhino-hippocampal and hippocamposeptal pathways. Together with EFNA5 plays also a role in synaptic plasticity in adult brain through regulation of synaptogenesis. In addition to its function in the nervous system, the interaction of EPHA5 with EFNA5 mediates communication between pancreatic islet cells to regulate glucose-stimulated insulin secretion. The chain is Ephrin type-A receptor 5 (EPHA5) from Homo sapiens (Human).